We begin with the raw amino-acid sequence, 364 residues long: Endopolygalacturonase B (364 aa).

A signal peptide spans 1–20 (MHFLQNSLIAAAMGAALVAA). The propeptide occupies 21–29 (APAADLDAR). Cys32 and Cys47 are oxidised to a cystine. The N-linked (GlcNAc...) asparagine glycan is linked to Asn138. 6 PbH1 repeats span residues 159–188 (SDHLTISDVTIDNSAGTSKGHNTDAFDIGS), 189–210 (STYITIDGATVYNQDDCIAINS), 211–231 (GEHITFTNGYCSGGHGLSIGS), 240–261 (VKSVTISNSKVVDSQNGVRIKT), 269–291 (VTDVTFQDIELSGITKYGLIVEQ), and 303–348 (TNGV…DITG). The active-site Proton donor is Asp203. Cys205 and Cys221 are disulfide-bonded. Residue His225 is part of the active site. 2 cysteine pairs are disulfide-bonded: Cys331/Cys336 and Cys355/Cys364.

It belongs to the glycosyl hydrolase 28 family.

It localises to the secreted. The catalysed reaction is (1,4-alpha-D-galacturonosyl)n+m + H2O = (1,4-alpha-D-galacturonosyl)n + (1,4-alpha-D-galacturonosyl)m.. In terms of biological role, involved in maceration and soft-rotting of plant tissue. Hydrolyzes the 1,4-alpha glycosidic bonds of de-esterified pectate in the smooth region of the plant cell wall. In Emericella nidulans (strain FGSC A4 / ATCC 38163 / CBS 112.46 / NRRL 194 / M139) (Aspergillus nidulans), this protein is Endopolygalacturonase B (pgaB).